Consider the following 354-residue polypeptide: Histidinol-phosphate aminotransferase (354 aa).

Lys210 is modified (N6-(pyridoxal phosphate)lysine).

It belongs to the class-II pyridoxal-phosphate-dependent aminotransferase family. Histidinol-phosphate aminotransferase subfamily. Homodimer. It depends on pyridoxal 5'-phosphate as a cofactor.

It carries out the reaction L-histidinol phosphate + 2-oxoglutarate = 3-(imidazol-4-yl)-2-oxopropyl phosphate + L-glutamate. It participates in amino-acid biosynthesis; L-histidine biosynthesis; L-histidine from 5-phospho-alpha-D-ribose 1-diphosphate: step 7/9. This Clostridium botulinum (strain Kyoto / Type A2) protein is Histidinol-phosphate aminotransferase.